A 326-amino-acid polypeptide reads, in one-letter code: Protoheme IX farnesyltransferase (326 aa).

A run of 8 helical transmembrane segments spans residues 35-55, 60-80, 106-126, 129-149, 157-177, 185-205, 238-258, and 289-309; these read LIPL…GWPL, LICT…LNCL, TAFI…VSGV, LAAG…TALL, IVVG…AATG, WLFA…ALLL, VLLS…YGLM, and WSIL…SALA.

This sequence belongs to the UbiA prenyltransferase family. Protoheme IX farnesyltransferase subfamily.

It is found in the cell inner membrane. It catalyses the reaction heme b + (2E,6E)-farnesyl diphosphate + H2O = Fe(II)-heme o + diphosphate. Its pathway is porphyrin-containing compound metabolism; heme O biosynthesis; heme O from protoheme: step 1/1. In terms of biological role, converts heme B (protoheme IX) to heme O by substitution of the vinyl group on carbon 2 of heme B porphyrin ring with a hydroxyethyl farnesyl side group. This is Protoheme IX farnesyltransferase from Synechococcus sp. (strain CC9902).